The chain runs to 571 residues: MGLCFSSAAKSSGHNRSSRNPHPHPPLTVVKSRPPRSPCSFMAVTIQKDHRTQPRRNATAKKTPTRHTPPHGKVREKVISNNGRRHGETIPYGKRVDFGYAKDFDHRYTIGKLLGHGQFGYTYVATDKKTGDRVAVKKIDKAKMTIPIAVEDVKREVKILQALTGHENVVRFYNAFEDKNSVYIVMELCEGGELLDRILARKDSRYSERDAAVVVRQMLKVAAECHLRGLVHRDMKPENFLFKSTEEDSPLKATDFGLSDFIKPGKKFHDIVGSAYYVAPEVLKRRSGPESDVWSIGVISYILLCGRRPFWDKTEDGIFKEVLKNKPDFRRKPWPTISNSAKDFVKKLLVKDPRARLTAAQALSHPWVREGGDASEIPIDISVLNNMRQFVKFSRLKQFALRALATTLDEEELADLRDQFDAIDVDKNGVISLEEMRQALAKDHPWKLKDARVAEILQAIDSNTDGFVDFGEFVAAALHVNQLEEHDSEKWQQRSRAAFEKFDIDGDGFITAEELRMHTGLKGSIEPLLEEADIDNDGKISLQEFRRLLRTASIKSRNVRSPPGYLISRKV.

Positions Met-1–Val-74 are disordered. A lipid anchor (N-myristoyl glycine) is attached at Gly-2. The S-palmitoyl cysteine moiety is linked to residue Cys-4. The segment covering Thr-63 to Gly-72 has biased composition (basic residues). In terms of domain architecture, Protein kinase spans Tyr-108–Val-368. ATP is bound by residues Leu-114–Thr-122 and Lys-137. The active-site Proton acceptor is Asp-234. Phosphoserine is present on Ser-274. Residues Ala-374–Leu-404 form an autoinhibitory domain region. EF-hand domains follow at residues Glu-411–Trp-446, Leu-448–Leu-483, Lys-490–Ile-525, and Leu-528–Lys-555. Positions 424, 426, 428, 435, 461, 463, 465, 472, 503, 505, 507, 514, 533, 535, 537, and 539 each coordinate Ca(2+). Ser-541 carries the post-translational modification Phosphoserine. Residue Glu-544 coordinates Ca(2+).

This sequence belongs to the protein kinase superfamily. Ser/Thr protein kinase family. CDPK subfamily.

It localises to the cell membrane. It is found in the nucleus. It catalyses the reaction L-seryl-[protein] + ATP = O-phospho-L-seryl-[protein] + ADP + H(+). The enzyme catalyses L-threonyl-[protein] + ATP = O-phospho-L-threonyl-[protein] + ADP + H(+). Its activity is regulated as follows. Activated by calcium. Autophosphorylation may play an important role in the regulation of the kinase activity. In terms of biological role, may play a role in signal transduction pathways that involve calcium as a second messenger. This Arabidopsis thaliana (Mouse-ear cress) protein is Calcium-dependent protein kinase 16 (CPK16).